Here is a 928-residue protein sequence, read N- to C-terminus: Isoleucine--tRNA ligase (928 aa).

Positions 57-67 match the 'HIGH' region motif; sequence PFANGNIHMGH. Glutamate 552 serves as a coordination point for L-isoleucyl-5'-AMP. The 'KMSKS' region signature appears at 593 to 597; the sequence is KMSKS. Position 596 (lysine 596) interacts with ATP. Residues cysteine 887, cysteine 890, cysteine 907, and cysteine 910 each coordinate Zn(2+).

Belongs to the class-I aminoacyl-tRNA synthetase family. IleS type 1 subfamily. As to quaternary structure, monomer. Zn(2+) is required as a cofactor.

The protein resides in the cytoplasm. The catalysed reaction is tRNA(Ile) + L-isoleucine + ATP = L-isoleucyl-tRNA(Ile) + AMP + diphosphate. Catalyzes the attachment of isoleucine to tRNA(Ile). As IleRS can inadvertently accommodate and process structurally similar amino acids such as valine, to avoid such errors it has two additional distinct tRNA(Ile)-dependent editing activities. One activity is designated as 'pretransfer' editing and involves the hydrolysis of activated Val-AMP. The other activity is designated 'posttransfer' editing and involves deacylation of mischarged Val-tRNA(Ile). This Lacticaseibacillus paracasei (strain ATCC 334 / BCRC 17002 / CCUG 31169 / CIP 107868 / KCTC 3260 / NRRL B-441) (Lactobacillus paracasei) protein is Isoleucine--tRNA ligase.